Here is a 305-residue protein sequence, read N- to C-terminus: Superkiller complex protein 8 (305 aa).

WD repeat units lie at residues 14–57 (AHED…LELQ), 62–101 (GHQL…QIRA), 104–143 (AGPV…KEYS), 146–187 (TRGK…HTLE), 188–227 (GHAM…LAAT), 230–269 (GHGS…CVHT), and 272–305 (DHQD…DCPI).

It belongs to the SKI8 family. In terms of assembly, component of the PAF1 complex. Component of the SKI complex.

It localises to the nucleus. The protein localises to the cytoplasm. Functionally, component of the PAF1 complex (PAF1C) which has multiple functions during transcription by RNA polymerase II and is implicated in regulation of development and maintenance of embryonic stem cell pluripotency. PAF1C associates with RNA polymerase II through interaction with POLR2A CTD non-phosphorylated and 'Ser-2'- and 'Ser-5'-phosphorylated forms and is involved in transcriptional elongation, acting both independently and synergistically with TCEA1 and in cooperation with the DSIF complex and HTATSF1. Also acts as a component of the SKI complex, a multiprotein complex that assists the RNA-degrading exosome during the mRNA decay and quality-control pathways. The SKI complex catalyzes mRNA extraction from 80S ribosomal complexes in the 3'-5' direction and channels mRNA to the cytosolic exosome for degradation. The sequence is that of Superkiller complex protein 8 (skic8) from Xenopus tropicalis (Western clawed frog).